The chain runs to 206 residues: A-type ATP synthase subunit D (206 aa).

The protein belongs to the V-ATPase D subunit family. As to quaternary structure, has multiple subunits with at least A(3), B(3), C, D, E, F, H, I and proteolipid K(x).

It is found in the cell membrane. In terms of biological role, component of the A-type ATP synthase that produces ATP from ADP in the presence of a proton gradient across the membrane. The protein is A-type ATP synthase subunit D of Methanococcoides burtonii (strain DSM 6242 / NBRC 107633 / OCM 468 / ACE-M).